The primary structure comprises 216 residues: MSITAAQVNELRKATGAGLMDCKKALTETGGDHEKAIDYLRKKGLAAASKKAGRVASEGAVGSYIHAGGKIGVLVEVNCETDFVARNENFQAFVKDIAMHIAAAAPQYVRREEVTADVVEREKEIYRAKARETGKPENIIEKIIEGQVNKFYADICLLEQQYVKDSDKTVQQFLNETIASIGENISIRRFVRYALGEGLAKKETDFAAEVAAAAGL.

Residues 81 to 84 (TDFV) form an involved in Mg(2+) ion dislocation from EF-Tu region.

Belongs to the EF-Ts family.

It is found in the cytoplasm. Functionally, associates with the EF-Tu.GDP complex and induces the exchange of GDP to GTP. It remains bound to the aminoacyl-tRNA.EF-Tu.GTP complex up to the GTP hydrolysis stage on the ribosome. The protein is Elongation factor Ts of Geobacter metallireducens (strain ATCC 53774 / DSM 7210 / GS-15).